We begin with the raw amino-acid sequence, 431 residues long: Enolase (431 aa).

Gln-167 lines the (2R)-2-phosphoglycerate pocket. The Proton donor role is filled by Glu-209. Residues Asp-246, Glu-289, and Asp-316 each coordinate Mg(2+). Lys-341, Arg-370, Ser-371, and Lys-392 together coordinate (2R)-2-phosphoglycerate. Lys-341 functions as the Proton acceptor in the catalytic mechanism.

Belongs to the enolase family. As to quaternary structure, component of the RNA degradosome, a multiprotein complex involved in RNA processing and mRNA degradation. Mg(2+) is required as a cofactor.

The protein resides in the cytoplasm. It localises to the secreted. The protein localises to the cell surface. The catalysed reaction is (2R)-2-phosphoglycerate = phosphoenolpyruvate + H2O. Its pathway is carbohydrate degradation; glycolysis; pyruvate from D-glyceraldehyde 3-phosphate: step 4/5. Its function is as follows. Catalyzes the reversible conversion of 2-phosphoglycerate (2-PG) into phosphoenolpyruvate (PEP). It is essential for the degradation of carbohydrates via glycolysis. The chain is Enolase from Shewanella denitrificans (strain OS217 / ATCC BAA-1090 / DSM 15013).